A 536-amino-acid polypeptide reads, in one-letter code: Probable galacturonosyltransferase 10 (536 aa).

Residues methionine 1–lysine 16 lie on the Cytoplasmic side of the membrane. Residues isoleucine 17–leucine 37 traverse the membrane as a helical; Signal-anchor for type II membrane protein segment. Residues serine 38–histidine 536 lie on the Lumenal side of the membrane. Asparagine 64, asparagine 246, asparagine 300, asparagine 403, and asparagine 436 each carry an N-linked (GlcNAc...) asparagine glycan.

This sequence belongs to the glycosyltransferase 8 family. Expressed in roots, inflorescences, siliques, leaves and stems.

Its subcellular location is the golgi apparatus membrane. Its pathway is glycan metabolism; pectin biosynthesis. In terms of biological role, may be involved in pectin and/or xylans biosynthesis in cell walls. In Arabidopsis thaliana (Mouse-ear cress), this protein is Probable galacturonosyltransferase 10 (GAUT10).